The sequence spans 239 residues: Probable transcriptional regulatory protein BBR47_14810 (239 aa).

The protein belongs to the TACO1 family. YeeN subfamily.

It localises to the cytoplasm. The chain is Probable transcriptional regulatory protein BBR47_14810 from Brevibacillus brevis (strain 47 / JCM 6285 / NBRC 100599).